The following is an 85-amino-acid chain: Small ribosomal subunit protein bS16 (85 aa).

It belongs to the bacterial ribosomal protein bS16 family.

The sequence is that of Small ribosomal subunit protein bS16 from Pelobacter propionicus (strain DSM 2379 / NBRC 103807 / OttBd1).